A 189-amino-acid chain; its full sequence is UPF0312 protein VC_A0539 (189 aa).

An N-terminal signal peptide occupies residues 1 to 22 (MKKTLMAVGLAAVMSIPFAANA).

This sequence belongs to the UPF0312 family. Type 1 subfamily.

The protein localises to the periplasm. This chain is UPF0312 protein VC_A0539, found in Vibrio cholerae serotype O1 (strain ATCC 39315 / El Tor Inaba N16961).